The primary structure comprises 163 residues: MNNELLQRIIEEVVSRLKKRAESTLSLSVAQLREIEPRTLCCQYSSLHLLQADLPLLEQIAEGCADNMSVVTIHEALACGVRVKISLQHRLLPAIPVRKLARLPLEFSDELGRIIVLHPDKLLSYADVAQLKGGVLVLRRRCVVTALAQDAVGTRNVQLIKQE.

This sequence belongs to the PduM family. In terms of assembly, interacts with shell protein PduK.

Its subcellular location is the bacterial microcompartment. It participates in polyol metabolism; 1,2-propanediol degradation. In terms of biological role, plays an essential role in assembly and/or stability of the bacterial microcompartment (BMC) dedicated to 1,2-propanediol (1,2-PD) degradation. Functionally, expression of a cosmid containing the full 21-gene pdu operon in E.coli allows E.coli to grow on 1,2-propanediol (1,2-PD) with the appearance of bacterial microcompartments (BMC) in its cytoplasm. The 1,2-PD-specific bacterial microcompartment (BMC) concentrates low levels of 1,2-PD catabolic enzymes, concentrates volatile reaction intermediates thus enhancing pathway flux and keeps the level of toxic, mutagenic propionaldehyde low. This is Bacterial microcompartment assembly protein PduM from Citrobacter freundii.